The primary structure comprises 358 residues: NAC domain-containing protein 12 (358 aa).

Residues 16 to 177 enclose the NAC domain; that stretch reads VPPGFRFHPT…GWVVCRVFRK (162 aa). The DNA-binding element occupies 116–183; the sequence is IGLRKTLVFY…VFRKKNYQKI (68 aa).

As to expression, stems and roots, specifically in interfascicular fibers (sclerenchyma), cells differentiating into vascular vessels (cambium), and xylem.

It is found in the nucleus. Transcriptional activator of genes involved in biosynthesis of secondary walls. Together with NST1, required for the secondary cell wall thickening and lignification of sclerenchymatous fibers and secondary xylem vessels (tracheary elements). Seems to repress the secondary cell wall thickening of xylary fibers. May also regulate the secondary cell wall lignification of other tissues. Binds to and activates the promoter of MYB46. The sequence is that of NAC domain-containing protein 12 from Arabidopsis thaliana (Mouse-ear cress).